The chain runs to 73 residues: Disintegrin barbourin (73 aa).

Residues 1–73 form the Disintegrin domain; that stretch reads EAGEECDCGS…ADCPRNGLYG (73 aa). 6 disulfides stabilise this stretch: Cys6–Cys21, Cys8–Cys16, Cys15–Cys38, Cys29–Cys35, Cys34–Cys59, and Cys47–Cys66. Positions 51–53 match the Cell attachment site; atypical (KGD) motif; sequence KGD.

It belongs to the venom metalloproteinase (M12B) family. P-II subfamily. P-IIa sub-subfamily. In terms of assembly, monomer. As to expression, expressed by the venom gland.

The protein localises to the secreted. Inhibitor of ligand binding to the integrins alpha-IIb/beta-3 (ITGA2B/ITGB3). Competition with fibrinogen for the RGD recognition sites on the alpha-IIb/beta-3 integrin results in the inhibition of platelet aggregation induced by ADP, thrombin, platelet-activating factor and collagen. The polypeptide is Disintegrin barbourin (Sistrurus miliarius barbouri (Dusky pigmy rattlesnake)).